The chain runs to 276 residues: Ribosomal RNA small subunit methyltransferase I (276 aa).

It belongs to the methyltransferase superfamily. RsmI family.

The protein localises to the cytoplasm. The enzyme catalyses cytidine(1402) in 16S rRNA + S-adenosyl-L-methionine = 2'-O-methylcytidine(1402) in 16S rRNA + S-adenosyl-L-homocysteine + H(+). Functionally, catalyzes the 2'-O-methylation of the ribose of cytidine 1402 (C1402) in 16S rRNA. The chain is Ribosomal RNA small subunit methyltransferase I from Mycoplasma pneumoniae (strain ATCC 29342 / M129 / Subtype 1) (Mycoplasmoides pneumoniae).